Consider the following 325-residue polypeptide: Transcription initiation factor IIB 2 (325 aa).

The segment covering Met1–Gln13 has biased composition (polar residues). Positions Met1–Val29 are disordered. Residues Asp28 to Glu58 form a TFIIB-type zinc finger. Cys32, Cys35, Cys50, and Cys53 together coordinate Zn(2+). The tract at residues Ser73–Lys93 is disordered. 2 tandem repeats follow at residues Gly144–Leu227 and Gln238–Glu319.

The protein belongs to the TFIIB family.

Functionally, stabilizes TBP binding to an archaeal box-A promoter. Also responsible for recruiting RNA polymerase II to the pre-initiation complex (DNA-TBP-TFIIB). In Halobacterium salinarum (strain ATCC 700922 / JCM 11081 / NRC-1) (Halobacterium halobium), this protein is Transcription initiation factor IIB 2.